We begin with the raw amino-acid sequence, 808 residues long: uncharacterized protein (808 aa).

The EF-hand 1 domain maps to 6-41 (SRSEKVKRIFQQFDGNHDGGLNREEMAALVVAVNPR). TPR repeat units follow at residues 234–267 (FDGH…QPTD), 269–301 (RPHF…AESG), 310–343 (PQIY…CPTH), 344–377 (FRAL…KPDY), 378–411 (ADAH…KPGH), 412–445 (VDAL…WPNH), and 447–479 (RAQL…TNRV). Positions 600 to 635 (AIKAINEKILALLDDSGSGRVDMGMFYAVIAPLCGG) constitute an EF-hand 2 domain. Residues 773–794 (FKQEEYKFREYESEAEAMKAKC) adopt a coiled-coil conformation.

This is an uncharacterized protein from Arabidopsis thaliana (Mouse-ear cress).